The sequence spans 148 residues: Nucleoside diphosphate kinase (148 aa).

Residues lysine 9, phenylalanine 57, arginine 85, threonine 91, arginine 102, and asparagine 112 each coordinate ATP. Residue threonine 91 is modified to Phosphothreonine. Residue histidine 115 is the Pros-phosphohistidine intermediate of the active site. The residue at position 122 (serine 122) is a Phosphoserine.

It belongs to the NDK family. As to quaternary structure, homotetramer. It depends on Mg(2+) as a cofactor.

It is found in the cytoplasm. It carries out the reaction a 2'-deoxyribonucleoside 5'-diphosphate + ATP = a 2'-deoxyribonucleoside 5'-triphosphate + ADP. The enzyme catalyses a ribonucleoside 5'-diphosphate + ATP = a ribonucleoside 5'-triphosphate + ADP. In terms of biological role, major role in the synthesis of nucleoside triphosphates other than ATP. The ATP gamma phosphate is transferred to the NDP beta phosphate via a ping-pong mechanism, using a phosphorylated active-site intermediate. In Oceanobacillus iheyensis (strain DSM 14371 / CIP 107618 / JCM 11309 / KCTC 3954 / HTE831), this protein is Nucleoside diphosphate kinase.